The sequence spans 447 residues: Glutamate--tRNA ligase 1 (447 aa).

A 'HIGH' region motif is present at residues P10–N20. The short motif at K240–R244 is the 'KMSKS' region element. Residue K243 participates in ATP binding.

Belongs to the class-I aminoacyl-tRNA synthetase family. Glutamate--tRNA ligase type 1 subfamily. Monomer.

The protein localises to the cytoplasm. The enzyme catalyses tRNA(Glu) + L-glutamate + ATP = L-glutamyl-tRNA(Glu) + AMP + diphosphate. Its function is as follows. Catalyzes the attachment of glutamate to tRNA(Glu) in a two-step reaction: glutamate is first activated by ATP to form Glu-AMP and then transferred to the acceptor end of tRNA(Glu). The protein is Glutamate--tRNA ligase 1 of Rickettsia prowazekii (strain Madrid E).